A 430-amino-acid polypeptide reads, in one-letter code: Probable beta-1,3-galactosyl-O-glycosyl-glycoprotein beta-1,6-N-acetylglucosaminyltransferase 7 (430 aa).

Residues 1 to 8 (MSQLRATK) lie on the Cytoplasmic side of the membrane. A helical; Signal-anchor for type II membrane protein transmembrane segment spans residues 9–25 (SGLVVRAVICIFIFLYL). Residues 26–430 (RNPTPAESEE…QSHFNMRLNR (405 aa)) lie on the Extracellular side of the membrane. Intrachain disulfides connect C53–C205, C139–C354, C160–C187, and C363–C395. N-linked (GlcNAc...) asparagine glycosylation is present at N87. N272 carries an N-linked (GlcNAc...) asparagine glycan.

This sequence belongs to the glycosyltransferase 14 family.

Its subcellular location is the golgi apparatus membrane. It participates in protein modification; protein glycosylation. Probable glycosyltransferase. The polypeptide is Probable beta-1,3-galactosyl-O-glycosyl-glycoprotein beta-1,6-N-acetylglucosaminyltransferase 7 (Homo sapiens (Human)).